The chain runs to 179 residues: NADH dehydrogenase [ubiquinone] 1 beta subcomplex subunit 9 (179 aa).

The residue at position 2 (alanine 2) is an N-acetylalanine. The residue at position 85 (serine 85) is a Phosphoserine. The disordered stretch occupies residues 136 to 162 (EVKQLQEETPPGGPLTEALPPARKEGD).

The protein belongs to the complex I LYR family. In terms of assembly, mammalian complex I is composed of 45 different subunits.

It localises to the mitochondrion inner membrane. Its function is as follows. Accessory subunit of the mitochondrial membrane respiratory chain NADH dehydrogenase (Complex I), that is believed to be not involved in catalysis. Complex I functions in the transfer of electrons from NADH to the respiratory chain. The immediate electron acceptor for the enzyme is believed to be ubiquinone. The sequence is that of NADH dehydrogenase [ubiquinone] 1 beta subcomplex subunit 9 (NDUFB9) from Homo sapiens (Human).